Reading from the N-terminus, the 116-residue chain is Non-specific lipid transfer protein GPI-anchored 17 (116 aa).

The N-terminal stretch at 1 to 24 (MKIGVVLVLLTVFVVVMSSTSVSA) is a signal peptide. 3 disulfide bridges follow: C31–C74, C42–C58, and C59–C99. A lipid anchor (GPI-anchor amidated asparagine) is attached at N107. A propeptide spans 108–116 (GKNFKNTSL) (removed in mature form). N113 carries N-linked (GlcNAc...) asparagine glycosylation.

This sequence belongs to the plant LTP family. As to expression, expressed in seedlings, preferentially in roots.

It is found in the cell membrane. Its function is as follows. Probable lipid transfer protein. This chain is Non-specific lipid transfer protein GPI-anchored 17, found in Arabidopsis thaliana (Mouse-ear cress).